We begin with the raw amino-acid sequence, 348 residues long: Histidinol-phosphate aminotransferase (348 aa).

Residue Lys-211 is modified to N6-(pyridoxal phosphate)lysine.

Belongs to the class-II pyridoxal-phosphate-dependent aminotransferase family. Histidinol-phosphate aminotransferase subfamily. As to quaternary structure, homodimer. It depends on pyridoxal 5'-phosphate as a cofactor.

The enzyme catalyses L-histidinol phosphate + 2-oxoglutarate = 3-(imidazol-4-yl)-2-oxopropyl phosphate + L-glutamate. It participates in amino-acid biosynthesis; L-histidine biosynthesis; L-histidine from 5-phospho-alpha-D-ribose 1-diphosphate: step 7/9. This Chlorobaculum tepidum (strain ATCC 49652 / DSM 12025 / NBRC 103806 / TLS) (Chlorobium tepidum) protein is Histidinol-phosphate aminotransferase.